The chain runs to 304 residues: Ribonuclease Z (304 aa).

Residues His-63, His-65, Asp-67, His-68, His-143, Asp-213, and His-271 each contribute to the Zn(2+) site. Catalysis depends on Asp-67, which acts as the Proton acceptor.

It belongs to the RNase Z family. Homodimer. The cofactor is Zn(2+).

It carries out the reaction Endonucleolytic cleavage of RNA, removing extra 3' nucleotides from tRNA precursor, generating 3' termini of tRNAs. A 3'-hydroxy group is left at the tRNA terminus and a 5'-phosphoryl group is left at the trailer molecule.. Functionally, zinc phosphodiesterase, which displays some tRNA 3'-processing endonuclease activity. Probably involved in tRNA maturation, by removing a 3'-trailer from precursor tRNA. This Porphyromonas gingivalis (strain ATCC BAA-308 / W83) protein is Ribonuclease Z.